The primary structure comprises 96 residues: Large ribosomal subunit protein eL21 (96 aa).

This sequence belongs to the eukaryotic ribosomal protein eL21 family.

The chain is Large ribosomal subunit protein eL21 from Methanothrix thermoacetophila (strain DSM 6194 / JCM 14653 / NBRC 101360 / PT) (Methanosaeta thermophila).